Consider the following 458-residue polypeptide: tRNA modification GTPase MnmE (458 aa).

Residues Arg23, Glu87, and Arg126 each contribute to the (6S)-5-formyl-5,6,7,8-tetrahydrofolate site. In terms of domain architecture, TrmE-type G spans 224 to 380; the sequence is GLSMVIVGKP…LKSKIKDLFF (157 aa). Asn234 provides a ligand contact to K(+). GTP contacts are provided by residues 234–239, 253–259, and 278–281; these read NVGKSS, TDIAGTT, and DTAG. Residue Ser238 participates in Mg(2+) binding. The K(+) site is built by Thr253, Ile255, and Thr258. Thr259 lines the Mg(2+) pocket. Lys458 lines the (6S)-5-formyl-5,6,7,8-tetrahydrofolate pocket.

The protein belongs to the TRAFAC class TrmE-Era-EngA-EngB-Septin-like GTPase superfamily. TrmE GTPase family. As to quaternary structure, homodimer. Heterotetramer of two MnmE and two MnmG subunits. The cofactor is K(+).

It is found in the cytoplasm. Its function is as follows. Exhibits a very high intrinsic GTPase hydrolysis rate. Involved in the addition of a carboxymethylaminomethyl (cmnm) group at the wobble position (U34) of certain tRNAs, forming tRNA-cmnm(5)s(2)U34. The polypeptide is tRNA modification GTPase MnmE (Clostridium perfringens (strain ATCC 13124 / DSM 756 / JCM 1290 / NCIMB 6125 / NCTC 8237 / Type A)).